The primary structure comprises 81 residues: Cytotoxin I-like P-15 (81 aa).

A signal peptide spans 1 to 21; sequence MKTLLLTLAAATIVCLDLGYT. 4 disulfides stabilise this stretch: C24-C42, C35-C59, C63-C74, and C75-C80.

The protein belongs to the three-finger toxin family. Short-chain subfamily. Type IA cytotoxin sub-subfamily. As to quaternary structure, monomer in solution; Homodimer and oligomer in the presence of negatively charged lipids forming a pore with a size ranging between 20 and 30 Angstroms. As to expression, expressed by the venom gland.

The protein resides in the secreted. The protein localises to the target cell membrane. Shows cytolytic activity on many different cells by forming pore in lipid membranes. In vivo, increases heart rate or kills the animal by cardiac arrest. In addition, it binds to heparin with high affinity, interacts with Kv channel-interacting protein 1 (KCNIP1) in a calcium-independent manner, and binds to integrin alpha-V/beta-3 (ITGAV/ITGB3) with moderate affinity. The polypeptide is Cytotoxin I-like P-15 (Naja atra (Chinese cobra)).